A 289-amino-acid chain; its full sequence is Energy-coupling factor transporter ATP-binding protein EcfA2 (289 aa).

An ABC transporter domain is found at 3–246 (IQAKKLNYTY…PEWLKNHHLN (244 aa)). An ATP-binding site is contributed by 40-47 (GHTGSGKS).

Belongs to the ABC transporter superfamily. Energy-coupling factor EcfA family. In terms of assembly, forms a stable energy-coupling factor (ECF) transporter complex composed of 2 membrane-embedded substrate-binding proteins (S component), 2 ATP-binding proteins (A component) and 2 transmembrane proteins (T component).

It is found in the cell membrane. Functionally, ATP-binding (A) component of a common energy-coupling factor (ECF) ABC-transporter complex. Unlike classic ABC transporters this ECF transporter provides the energy necessary to transport a number of different substrates. This Ligilactobacillus salivarius (strain UCC118) (Lactobacillus salivarius) protein is Energy-coupling factor transporter ATP-binding protein EcfA2.